The following is a 184-amino-acid chain: Gastrokine-2 (184 aa).

A signal peptide spans 1-20; it reads MKPLVAFLVVLSIFGIQSQA. Residues 54–151 form the BRICHOS domain; it reads HSGSCSSTTI…LCKHMPLYEG (98 aa). An intrachain disulfide couples Cys81 to Cys143.

As to quaternary structure, heterodimer with TFF1; disulfide linked. Interacts with TFF2. Stomach foveolar epithelium and duodenal Brunner's glands.

It is found in the secreted. The protein resides in the golgi apparatus. The sequence is that of Gastrokine-2 (Gkn2) from Mus musculus (Mouse).